The sequence spans 371 residues: Peptide chain release factor 2 (371 aa).

Residue glutamine 251 is modified to N5-methylglutamine.

Belongs to the prokaryotic/mitochondrial release factor family. Post-translationally, methylated by PrmC. Methylation increases the termination efficiency of RF2.

It is found in the cytoplasm. In terms of biological role, peptide chain release factor 2 directs the termination of translation in response to the peptide chain termination codons UGA and UAA. The chain is Peptide chain release factor 2 from Arthrobacter sp. (strain FB24).